A 277-amino-acid chain; its full sequence is tRNA U34 carboxymethyltransferase (277 aa).

Residues lysine 46, tryptophan 60, lysine 65, glycine 84, 106-108, 133-134, tyrosine 153, and arginine 268 contribute to the carboxy-S-adenosyl-L-methionine site; these read DPS and VE.

Belongs to the class I-like SAM-binding methyltransferase superfamily. CmoB family. Homotetramer.

It catalyses the reaction carboxy-S-adenosyl-L-methionine + 5-hydroxyuridine(34) in tRNA = 5-carboxymethoxyuridine(34) in tRNA + S-adenosyl-L-homocysteine + H(+). Catalyzes carboxymethyl transfer from carboxy-S-adenosyl-L-methionine (Cx-SAM) to 5-hydroxyuridine (ho5U) to form 5-carboxymethoxyuridine (cmo5U) at position 34 in tRNAs. The polypeptide is tRNA U34 carboxymethyltransferase (Wolinella succinogenes (strain ATCC 29543 / DSM 1740 / CCUG 13145 / JCM 31913 / LMG 7466 / NCTC 11488 / FDC 602W) (Vibrio succinogenes)).